The primary structure comprises 634 residues: UPF0329 protein ECU07_1850/ECU10_0050 (634 aa).

2 stretches are compositionally biased toward basic and acidic residues: residues Arg354–Gly365 and Gly397–Glu407. The interval Arg354–Glu438 is disordered. Over residues Gly408–Glu417 the composition is skewed to acidic residues.

Belongs to the UPF0329 family.

The polypeptide is UPF0329 protein ECU07_1850/ECU10_0050 (Encephalitozoon cuniculi (strain GB-M1) (Microsporidian parasite)).